The following is a 217-amino-acid chain: Adenylate kinase (217 aa).

11-16 contributes to the ATP binding site; the sequence is GAGKGT. An NMP region spans residues 31 to 60; the sequence is STGDMFREAMANKTPVGLEAKSYIDKGDLV. Residues threonine 32, arginine 37, 58–60, 86–89, and glutamine 93 each bind AMP; these read DLV and GFPR. An LID region spans residues 127–165; the sequence is ARFMCKNCGATYNKFSKKPKVEGTCDRCGGHEFYQREDD. Arginine 128 is a binding site for ATP. Cysteine 131 and cysteine 134 together coordinate Zn(2+). 137 to 138 serves as a coordination point for ATP; it reads TY. Zn(2+) is bound by residues cysteine 151 and cysteine 154. The AMP site is built by arginine 162 and arginine 173. Glutamine 201 is a binding site for ATP.

This sequence belongs to the adenylate kinase family. In terms of assembly, monomer.

The protein localises to the cytoplasm. It carries out the reaction AMP + ATP = 2 ADP. It functions in the pathway purine metabolism; AMP biosynthesis via salvage pathway; AMP from ADP: step 1/1. Its function is as follows. Catalyzes the reversible transfer of the terminal phosphate group between ATP and AMP. Plays an important role in cellular energy homeostasis and in adenine nucleotide metabolism. The chain is Adenylate kinase from Lactobacillus delbrueckii subsp. bulgaricus (strain ATCC 11842 / DSM 20081 / BCRC 10696 / JCM 1002 / NBRC 13953 / NCIMB 11778 / NCTC 12712 / WDCM 00102 / Lb 14).